The sequence spans 195 residues: Imidazoleglycerol-phosphate dehydratase (195 aa).

It belongs to the imidazoleglycerol-phosphate dehydratase family.

It is found in the cytoplasm. It carries out the reaction D-erythro-1-(imidazol-4-yl)glycerol 3-phosphate = 3-(imidazol-4-yl)-2-oxopropyl phosphate + H2O. It functions in the pathway amino-acid biosynthesis; L-histidine biosynthesis; L-histidine from 5-phospho-alpha-D-ribose 1-diphosphate: step 6/9. This Frankia casuarinae (strain DSM 45818 / CECT 9043 / HFP020203 / CcI3) protein is Imidazoleglycerol-phosphate dehydratase.